The following is a 314-amino-acid chain: DNA-directed RNA polymerase subunit alpha (314 aa).

Positions methionine 1 to asparagine 228 are alpha N-terminal domain (alpha-NTD). Positions proline 243 to alanine 314 are alpha C-terminal domain (alpha-CTD).

It belongs to the RNA polymerase alpha chain family. As to quaternary structure, homodimer. In cyanobacteria the RNAP catalytic core is composed of 2 alpha, 1 beta, 1 beta', 1 gamma and 1 omega subunit. When a sigma factor is associated with the core the holoenzyme is formed, which can initiate transcription.

The catalysed reaction is RNA(n) + a ribonucleoside 5'-triphosphate = RNA(n+1) + diphosphate. DNA-dependent RNA polymerase catalyzes the transcription of DNA into RNA using the four ribonucleoside triphosphates as substrates. This chain is DNA-directed RNA polymerase subunit alpha, found in Synechocystis sp. (strain ATCC 27184 / PCC 6803 / Kazusa).